The primary structure comprises 76 residues: Sec-independent protein translocase protein TatA (76 aa).

A helical membrane pass occupies residues 1 to 21 (MGGLSIWHWLIVLLIVALVFG). Positions 40–76 (KDGMKEGETPADAQQLPRTGTVDVNAKETTRSDSNKA) are disordered. Basic and acidic residues predominate over residues 64 to 76 (NAKETTRSDSNKA).

Belongs to the TatA/E family. In terms of assembly, the Tat system comprises two distinct complexes: a TatABC complex, containing multiple copies of TatA, TatB and TatC subunits, and a separate TatA complex, containing only TatA subunits. Substrates initially bind to the TatABC complex, which probably triggers association of the separate TatA complex to form the active translocon.

Its subcellular location is the cell inner membrane. Part of the twin-arginine translocation (Tat) system that transports large folded proteins containing a characteristic twin-arginine motif in their signal peptide across membranes. TatA could form the protein-conducting channel of the Tat system. This chain is Sec-independent protein translocase protein TatA, found in Burkholderia ambifaria (strain MC40-6).